Consider the following 342-residue polypeptide: MKTVSIIGGTGYTGSELLGILANHKDVEVKNVTSRKDSGKKLTKIHPQVKNLKNYNELEFKNLNPENIDTDIVFCATPHGASLKIVPILHEMGINVIDLSGDYRFEDLEMYEAWYGLKHTGKINSVYGLPEIYREKIKKANVIANPGCYPTGAILSMAPLVSNDIVEERIIFDSKSGVSGAGVEATETTHFPNVNENLGPYKLTKHRHSPEIGKELEYLAEKSLKVSFTPHLLPVTRGILTTAHAFLKEDIGRADIVEIYEEFYKNEFFVRIYDEEMISLTGVRSSNFCDIGGFEIDRFGRIVVVSAIDNLVKGASGQAIQNMNILMGFDEKEGLNIGGLRP.

C148 is an active-site residue.

It belongs to the NAGSA dehydrogenase family. Type 1 subfamily.

Its subcellular location is the cytoplasm. It catalyses the reaction N-acetyl-L-glutamate 5-semialdehyde + phosphate + NADP(+) = N-acetyl-L-glutamyl 5-phosphate + NADPH + H(+). Its pathway is amino-acid biosynthesis; L-arginine biosynthesis; N(2)-acetyl-L-ornithine from L-glutamate: step 3/4. Catalyzes the NADPH-dependent reduction of N-acetyl-5-glutamyl phosphate to yield N-acetyl-L-glutamate 5-semialdehyde. This Methanococcus vannielii (strain ATCC 35089 / DSM 1224 / JCM 13029 / OCM 148 / SB) protein is N-acetyl-gamma-glutamyl-phosphate reductase.